A 392-amino-acid polypeptide reads, in one-letter code: MTSNRMQTGHPADGVYFGLMSGTSMDGVDGIAVRFEAGKPPAVLSEAFVGFADTLRDALFALQQPGDDEIEREALAANALAARYAVCCHELLRTAGLSPDDVRALGVHGQTVRHRPERGYTRQLNNAALLAELTRIDVIADFRSRDVAAGGQGAPLVPAFHATVFGSPDETRVVCNLGGISNITILPAGGGPQGEGHARNDTVRGHDCGPANALIDAWVERHLKQPFDDGGRFAARGKVDETLLAALLDEPYFRQNAPKSTGRDLFNADWLDAKLAGFQHLAPENVQATLTALTAATVADEIARHAGDCRAVYVCGGGARNPVLLDALATALAARGLDAAVATTAALGVPPQQVESLAFAWLAYRFNARAPGNVSTVTGAAGERVLGALYPR.

Residue 22–29 participates in ATP binding; it reads GTSMDGVD.

Belongs to the anhydro-N-acetylmuramic acid kinase family.

It carries out the reaction 1,6-anhydro-N-acetyl-beta-muramate + ATP + H2O = N-acetyl-D-muramate 6-phosphate + ADP + H(+). It participates in amino-sugar metabolism; 1,6-anhydro-N-acetylmuramate degradation. The protein operates within cell wall biogenesis; peptidoglycan recycling. In terms of biological role, catalyzes the specific phosphorylation of 1,6-anhydro-N-acetylmuramic acid (anhMurNAc) with the simultaneous cleavage of the 1,6-anhydro ring, generating MurNAc-6-P. Is required for the utilization of anhMurNAc either imported from the medium or derived from its own cell wall murein, and thus plays a role in cell wall recycling. This chain is Anhydro-N-acetylmuramic acid kinase, found in Burkholderia pseudomallei (strain 1106a).